The chain runs to 218 residues: Pyridoxine/pyridoxamine 5'-phosphate oxidase (218 aa).

Substrate is bound by residues 14–17 (RREY) and K72. FMN is bound by residues 67 to 72 (RIVLLK), 82 to 83 (YT), R88, K89, and Q111. Substrate is bound by residues Y129, R133, and S137. FMN is bound by residues 146–147 (QS) and W191. 197–199 (RLH) contacts substrate. R201 contributes to the FMN binding site.

This sequence belongs to the pyridoxamine 5'-phosphate oxidase family. In terms of assembly, homodimer. The cofactor is FMN.

The catalysed reaction is pyridoxamine 5'-phosphate + O2 + H2O = pyridoxal 5'-phosphate + H2O2 + NH4(+). The enzyme catalyses pyridoxine 5'-phosphate + O2 = pyridoxal 5'-phosphate + H2O2. It functions in the pathway cofactor metabolism; pyridoxal 5'-phosphate salvage; pyridoxal 5'-phosphate from pyridoxamine 5'-phosphate: step 1/1. It participates in cofactor metabolism; pyridoxal 5'-phosphate salvage; pyridoxal 5'-phosphate from pyridoxine 5'-phosphate: step 1/1. Its function is as follows. Catalyzes the oxidation of either pyridoxine 5'-phosphate (PNP) or pyridoxamine 5'-phosphate (PMP) into pyridoxal 5'-phosphate (PLP). The protein is Pyridoxine/pyridoxamine 5'-phosphate oxidase of Escherichia fergusonii (strain ATCC 35469 / DSM 13698 / CCUG 18766 / IAM 14443 / JCM 21226 / LMG 7866 / NBRC 102419 / NCTC 12128 / CDC 0568-73).